The chain runs to 129 residues: Glycine cleavage system H protein (129 aa).

Positions 24 to 106 (TYTVGITEHA…YVGGWIFKIK (83 aa)) constitute a Lipoyl-binding domain. N6-lipoyllysine is present on Lys65.

It belongs to the GcvH family. In terms of assembly, the glycine cleavage system is composed of four proteins: P, T, L and H. It depends on (R)-lipoate as a cofactor.

In terms of biological role, the glycine cleavage system catalyzes the degradation of glycine. The H protein shuttles the methylamine group of glycine from the P protein to the T protein. In Salmonella paratyphi B (strain ATCC BAA-1250 / SPB7), this protein is Glycine cleavage system H protein.